The sequence spans 215 residues: NADH-quinone oxidoreductase subunit C (215 aa).

It belongs to the complex I 30 kDa subunit family. NDH-1 is composed of 14 different subunits. Subunits NuoB, C, D, E, F, and G constitute the peripheral sector of the complex.

The protein resides in the cell inner membrane. The enzyme catalyses a quinone + NADH + 5 H(+)(in) = a quinol + NAD(+) + 4 H(+)(out). Functionally, NDH-1 shuttles electrons from NADH, via FMN and iron-sulfur (Fe-S) centers, to quinones in the respiratory chain. The immediate electron acceptor for the enzyme in this species is believed to be ubiquinone. Couples the redox reaction to proton translocation (for every two electrons transferred, four hydrogen ions are translocated across the cytoplasmic membrane), and thus conserves the redox energy in a proton gradient. The protein is NADH-quinone oxidoreductase subunit C of Methylobacterium sp. (strain 4-46).